The sequence spans 293 residues: Tumor necrosis factor receptor superfamily member 13B (293 aa).

At 1–165 (MSGLGRSRRG…SADQVALVYS (165 aa)) the chain is on the extracellular side. TNFR-Cys repeat units follow at residues 33-67 (SCPE…AFCR) and 70-104 (SCRK…AYFC). Disulfide bonds link Cys-34–Cys-47, Cys-50–Cys-62, Cys-54–Cys-66, Cys-71–Cys-86, Cys-89–Cys-100, and Cys-93–Cys-104. Residues 115-146 (PPELRRQRSGEVENNSDNSGRYQGLEHRGSEA) form a disordered region. Residues 126 to 135 (VENNSDNSGR) show a composition bias toward polar residues. The N-linked (GlcNAc...) asparagine glycan is linked to Asn-128. Residues 166–186 (TLGLCLCAVLCCFLVAVACFL) form a helical; Signal-anchor for type III membrane protein membrane-spanning segment. The Cytoplasmic portion of the chain corresponds to 187 to 293 (KKRGDPCSCQ…VPAQEGGPGA (107 aa)). Residues 192–226 (PCSCQPRSRPRQSPAKSSQDHAMEAGSPVSTSPEP) form a disordered region.

As to quaternary structure, binds TRAF2, TRAF5 and TRAF6. Binds the NH2-terminal domain of CAMLG with its C-terminus. Highly expressed in spleen, thymus, small intestine and peripheral blood leukocytes. Expressed in resting B-cells and activated T-cells, but not in resting T-cells.

It localises to the membrane. Its function is as follows. Receptor for TNFSF13/APRIL and TNFSF13B/TALL1/BAFF/BLYS that binds both ligands with similar high affinity. Mediates calcineurin-dependent activation of NF-AT, as well as activation of NF-kappa-B and AP-1. Involved in the stimulation of B- and T-cell function and the regulation of humoral immunity. This chain is Tumor necrosis factor receptor superfamily member 13B (TNFRSF13B), found in Homo sapiens (Human).